The following is an 883-amino-acid chain: DNA mismatch repair protein MutS (883 aa).

633-640 (GPNMGGKS) contributes to the ATP binding site.

The protein belongs to the DNA mismatch repair MutS family.

Functionally, this protein is involved in the repair of mismatches in DNA. It is possible that it carries out the mismatch recognition step. This protein has a weak ATPase activity. The chain is DNA mismatch repair protein MutS from Bordetella pertussis (strain Tohama I / ATCC BAA-589 / NCTC 13251).